Here is a 226-residue protein sequence, read N- to C-terminus: Probable functional amyloid protease FapD (226 aa).

A signal peptide spans 1 to 18 (MRTLILSLLLLVDLTTQA). In terms of domain architecture, Peptidase C39 spans 50-180 (QKTDFSCGAA…KGWNGIVFAV (131 aa)). Cys-56 is an active-site residue.

It belongs to the FapD family.

It localises to the periplasm. Probable protease that might be involved in processing fibril precursors. Upon overexpression of the endogenous six-gene locus (fapA-fapF), cells form large clumps during liquid growth, make large amounts of biofilm and produce amyloid fibrils. The protein is Probable functional amyloid protease FapD of Pseudomonas aeruginosa (strain ATCC 15692 / DSM 22644 / CIP 104116 / JCM 14847 / LMG 12228 / 1C / PRS 101 / PAO1).